Reading from the N-terminus, the 196-residue chain is dTTP/UTP pyrophosphatase (196 aa).

D72 acts as the Proton acceptor in catalysis.

It belongs to the Maf family. YhdE subfamily. It depends on a divalent metal cation as a cofactor.

It localises to the cytoplasm. The catalysed reaction is dTTP + H2O = dTMP + diphosphate + H(+). It carries out the reaction UTP + H2O = UMP + diphosphate + H(+). In terms of biological role, nucleoside triphosphate pyrophosphatase that hydrolyzes dTTP and UTP. May have a dual role in cell division arrest and in preventing the incorporation of modified nucleotides into cellular nucleic acids. The sequence is that of dTTP/UTP pyrophosphatase from Chlamydia trachomatis serovar L2 (strain ATCC VR-902B / DSM 19102 / 434/Bu).